We begin with the raw amino-acid sequence, 147 residues long: Protein LOL1 (147 aa).

The interval Met1–Ser38 is disordered. Polar residues predominate over residues Ser22–Ser38. The putative zinc finger stretch occupies residues Gln47–Val77.

The protein localises to the nucleus. In terms of biological role, putative zinc finger that may be involved in programmed cell death and defense response. This chain is Protein LOL1 (LOL1), found in Oryza sativa subsp. japonica (Rice).